A 367-amino-acid polypeptide reads, in one-letter code: Nuclear hormone receptor-like 1 (367 aa).

Residues 32–107 constitute a DNA-binding region (nuclear receptor); it reads GQPCVVCGDD…NGMTKSLVLN (76 aa). NR C4-type zinc fingers lie at residues 35 to 55 and 71 to 95; these read CVVC…CEGC and CKSI…FQKC. The region spanning 145–367 is the NR LBD domain; the sequence is EFQSRIDQVT…IANILLFKFT (223 aa).

Belongs to the nuclear hormone receptor family.

The protein resides in the nucleus. This chain is Nuclear hormone receptor-like 1 (nhr-1), found in Onchocerca volvulus.